The chain runs to 881 residues: Ent-kaurene synthase CPS/KS, chloroplastic (881 aa).

The N-terminal 41 residues, 1-41 (MASSTLIQNRSCGVTSSMSSFQIFRGQPLRFPGTRTPAAVQ), are a transit peptide targeting the chloroplast. Residues D417, D419, D635, D639, N778, D779, and E786 each coordinate Mg(2+). The DXDDTA motif signature appears at 417–422 (DVDDTA). Residues 635 to 639 (DDYFD) carry the DDXXD motif motif.

It belongs to the terpene synthase family. Requires Mg(2+) as cofactor.

The protein localises to the plastid. It localises to the chloroplast. The catalysed reaction is (2E,6E,10E)-geranylgeranyl diphosphate = ent-copalyl diphosphate. It carries out the reaction ent-copalyl diphosphate = ent-kaur-16-ene + diphosphate. It catalyses the reaction ent-copalyl diphosphate = ent-beyerene + diphosphate. The enzyme catalyses ent-copalyl diphosphate = ent-sandaracopimara-8(14),15-diene + diphosphate. The catalysed reaction is ent-copalyl diphosphate = ent-isokaurene + diphosphate. It carries out the reaction ent-copalyl diphosphate + H2O = 16alpha-hydroxy-ent-kaurene + diphosphate. It participates in secondary metabolite biosynthesis; terpenoid biosynthesis. In terms of biological role, bifunctional copalyl diphosphate/kaurene synthase involved in the biosynthesis of labdane-related diterpenoids (LRDs) natural products such as ent-beyerene, an antimicrobial compound. Supports the conversion of geranylgeranyl diphosphate (GGPP) to ent-copalyl diphosphate (ent-CDP). Also catalyzes the subsequent cyclization of ent-CDP into many diterpenes, including ent-kaur-16-ene as the major product, and ent-beyerene, ent-sandaracopimaradiene, ent-kaur-15-ene (ent-isokaurene) and 16-hydroxy-ent-kaurene (ent-16-alpha-hydroxy-kaurene) as minor products. The sequence is that of Ent-kaurene synthase CPS/KS, chloroplastic from Physcomitrium patens (Spreading-leaved earth moss).